The sequence spans 1009 residues: Rho GTPase-activating protein gacT (1009 aa).

Disordered regions lie at residues 1–72 (MKNI…SRNH) and 89–117 (TSHHSHSHNHNHNHNHQLTQPIQQQQQTQ). Over residues 12 to 23 (FHKDKKEGDKQD) the composition is skewed to basic and acidic residues. Low complexity predominate over residues 26 to 35 (GSSGSSGNSG). The segment covering 58–69 (ESYSGDNSPTLS) has biased composition (polar residues). Over residues 89–103 (TSHHSHSHNHNHNHN) the composition is skewed to basic residues. Low complexity predominate over residues 104–117 (HQLTQPIQQQQQTQ). Residues 163–351 (VPLTQVPCRA…EVFPQHHLYY (189 aa)) form the Rho-GAP domain. Disordered stretches follow at residues 388–420 (TISGLLPSNGQNNSPSSSTITSTTITSPHDSTA), 432–482 (PEQQ…TFRV), and 508–571 (GPSG…TTDQ). 3 stretches are compositionally biased toward low complexity: residues 394–415 (PSNGQNNSPSSSTITSTTITSP), 432–468 (PEQQQQMLQQQQQQQQQQEKQSSSSLSQSQQSIQPIS), and 512–521 (TTGTTPNGGS). The segment covering 522–546 (LSIGGGNGGNGGSSLSVGSGGGNGG) has biased composition (gly residues). A compositionally biased stretch (low complexity) spans 547–557 (SSLSVGSNTSV). Residues 580–656 (AYTNNEDTKA…IEREIEKKRL (77 aa)) are a coiled coil. Residues 686 to 713 (ISTIDGSGGSNRNSKNYGNGSSSSSNRR) are disordered. Residues 695 to 713 (SNRNSKNYGNGSSSSSNRR) are compositionally biased toward low complexity. Residues 715-743 (SNTINQQLQMQLQQLQIQQQQYQQTQQSQ) adopt a coiled-coil conformation. The interval 759–781 (TTTTTTTSSGSNRFSSNRYKPVD) is disordered. Polar residues predominate over residues 766–781 (SSGSNRFSSNRYKPVD). Positions 839 to 952 (ENLVLLQQQY…IEEIHLLETY (114 aa)) form a coiled coil. Positions 965–1009 (STTKDLLTRSRSPTLPSSINMSTSSLGSSSSSAYNNNNNNNNVPK) are disordered. Polar residues predominate over residues 967 to 980 (TKDLLTRSRSPTLP). The span at 981–1009 (SSINMSTSSLGSSSSSAYNNNNNNNNVPK) shows a compositional bias: low complexity.

The protein localises to the cytoplasm. In terms of biological role, rho GTPase-activating protein involved in the signal transduction pathway. The polypeptide is Rho GTPase-activating protein gacT (gacT) (Dictyostelium discoideum (Social amoeba)).